A 365-amino-acid chain; its full sequence is UPF0324 membrane protein Cj0999c (365 aa).

A run of 11 helical transmembrane segments spans residues 12–34 (IVRS…MYLS), 44–63 (HLAA…PWFF), 83–100 (LGIV…LLSV), 105–127 (FLLS…TKIF), 134–153 (SMLV…LALE), 163–185 (GILA…PIAF), 197–219 (AMGV…AEMA), 234–256 (VIIK…YFFA), 269–288 (SITI…LNTY), 303–325 (IISL…LGLQ), and 338–360 (VFGL…TLAF).

This sequence belongs to the UPF0324 family.

It is found in the cell membrane. This chain is UPF0324 membrane protein Cj0999c, found in Campylobacter jejuni subsp. jejuni serotype O:2 (strain ATCC 700819 / NCTC 11168).